Consider the following 153-residue polypeptide: UPF0260 protein CKO_01185 (153 aa).

It belongs to the UPF0260 family.

The protein is UPF0260 protein CKO_01185 of Citrobacter koseri (strain ATCC BAA-895 / CDC 4225-83 / SGSC4696).